Consider the following 240-residue polypeptide: Probable transcriptional regulatory protein MS53_0373 (240 aa).

Belongs to the TACO1 family.

Its subcellular location is the cytoplasm. This chain is Probable transcriptional regulatory protein MS53_0373, found in Mycoplasmopsis synoviae (strain 53) (Mycoplasma synoviae).